Reading from the N-terminus, the 363-residue chain is Fructose-bisphosphate aldolase (363 aa).

Positions 56 and 147 each coordinate substrate. Glu-188 (proton acceptor) is an active-site residue. Residue Lys-230 is the Schiff-base intermediate with dihydroxyacetone-P of the active site.

It belongs to the class I fructose-bisphosphate aldolase family.

It catalyses the reaction beta-D-fructose 1,6-bisphosphate = D-glyceraldehyde 3-phosphate + dihydroxyacetone phosphate. It participates in carbohydrate degradation; glycolysis; D-glyceraldehyde 3-phosphate and glycerone phosphate from D-glucose: step 4/4. This Schistosoma mansoni (Blood fluke) protein is Fructose-bisphosphate aldolase.